The primary structure comprises 130 residues: Small ribosomal subunit protein uS11 (130 aa).

Belongs to the universal ribosomal protein uS11 family. In terms of assembly, part of the 30S ribosomal subunit. Interacts with proteins S7 and S18. Binds to IF-3.

In terms of biological role, located on the platform of the 30S subunit, it bridges several disparate RNA helices of the 16S rRNA. Forms part of the Shine-Dalgarno cleft in the 70S ribosome. The sequence is that of Small ribosomal subunit protein uS11 from Helicobacter hepaticus (strain ATCC 51449 / 3B1).